Here is a 519-residue protein sequence, read N- to C-terminus: Importin subunit alpha-5 (519 aa).

The IBB domain occupies 1 to 58; it reads MSLRPSTKTEIRRIRYKVSVDAEEGRRRREDFLVEIRKSKRNENLMKKRRVKVLPPDY. ARM repeat units follow at residues 103 to 143, 146 to 185, 188 to 228, 230 to 269, 272 to 311, 314 to 354, 357 to 396, and 400 to 439; these read SPPT…NIAS, SEHTKVVIDHGVVPLFVQLLASPDDDVREQAIWGLGNVAG, IQCR…NFFR, KPSPPFDLVKHVLPVLKRLVYSDDEQVLIDACWALSNLSD, NENIQSVIEAGVVPRLVELLQHASPVVLVPALRCIGNIVS, SQQT…NITA, EEQIQSVIDANLIPSLVNLAQHAEFDIKKEAIWAISNASV, and PNQIKYLVEQNCIKALCDILVCPDLRIILVSLGGLEMILI.

This sequence belongs to the importin alpha family. Forms a complex with importin subunit beta-1.

The protein localises to the nucleus envelope. Its function is as follows. Binds to conventional NLS motifs and mediates nuclear protein import across the nuclear envelope. This is Importin subunit alpha-5 from Arabidopsis thaliana (Mouse-ear cress).